The following is a 54-amino-acid chain: Large ribosomal subunit protein eL37 (54 aa).

The Zn(2+) site is built by Cys-20, Cys-23, Cys-35, and Cys-38. The C4-type zinc-finger motif lies at 20 to 38 (CRRCGHHTYNVRTKRCSHC).

Belongs to the eukaryotic ribosomal protein eL37 family. It depends on Zn(2+) as a cofactor.

In terms of biological role, binds to the 23S rRNA. This chain is Large ribosomal subunit protein eL37 (rpl37e), found in Thermoplasma volcanium (strain ATCC 51530 / DSM 4299 / JCM 9571 / NBRC 15438 / GSS1).